The sequence spans 172 residues: uncharacterized protein (172 aa).

The 169-residue stretch at 3 to 171 (KKVAIILTNE…FNREIVNQLN (169 aa)) folds into the PfpI endopeptidase domain.

This sequence belongs to the peptidase C56 family.

This is an uncharacterized protein from Staphylococcus saprophyticus subsp. saprophyticus (strain ATCC 15305 / DSM 20229 / NCIMB 8711 / NCTC 7292 / S-41).